The chain runs to 308 residues: Shikimate kinase 1, chloroplastic (308 aa).

The transit peptide at 1-62 directs the protein to the chloroplast; that stretch reads MEAGVGLALQ…RGSKPVAPLR (62 aa). 103 to 110 provides a ligand contact to ATP; sequence GMMGSGKS. Mg(2+) is bound at residue serine 110. Residues aspartate 128, arginine 153, and glycine 175 each coordinate substrate. An ATP-binding site is contributed by arginine 214.

It belongs to the shikimate kinase family. Mg(2+) is required as a cofactor. As to expression, expressed in panicles.

Its subcellular location is the plastid. The protein resides in the chloroplast. It carries out the reaction shikimate + ATP = 3-phosphoshikimate + ADP + H(+). It functions in the pathway metabolic intermediate biosynthesis; chorismate biosynthesis; chorismate from D-erythrose 4-phosphate and phosphoenolpyruvate: step 5/7. Functionally, catalyzes the specific phosphorylation of the 3-hydroxyl group of shikimic acid using ATP as a cosubstrate. This chain is Shikimate kinase 1, chloroplastic (SK1), found in Oryza sativa subsp. japonica (Rice).